The chain runs to 376 residues: TelA-like protein SE_1089 (376 aa).

Belongs to the TelA family.

The protein is TelA-like protein SE_1089 of Staphylococcus epidermidis (strain ATCC 12228 / FDA PCI 1200).